A 396-amino-acid chain; its full sequence is Schizokinen exporter SchE (396 aa).

The first 25 residues, 1–25 (MLPKLILLATLYISQFIPTTFFIQA), serve as a signal peptide directing secretion. Topologically, residues 26-39 (LPVFMRQQKMSLDV) are cytoplasmic. A helical membrane pass occupies residues 40–60 (IGFLGLLILPSGLKFLWSPFI). Residues 61-73 (DRYRLGKLGHYRG) lie on the Periplasmic side of the membrane. Residues 74-94 (WIICFQLLLISTMLVTAFIDI) form a helical membrane-spanning segment. The Cytoplasmic portion of the chain corresponds to 95–104 (QDNLNAFLTC). The helical transmembrane segment at 105–127 (MFLASLFSSSQDIATDALAVNLL) threads the bilayer. The Periplasmic segment spans residues 128-137 (EPQERGLGNA). The chain crosses the membrane as a helical span at residues 138-158 (IQSGGNIFGAIIGGGVMLILL). The Cytoplasmic portion of the chain corresponds to 159–162 (DKIG). The chain crosses the membrane as a helical span at residues 163–183 (WRYSLITLSIFMLINLVPILI). At 184 to 214 (YREKSQHQLENSTFFRSYFQPFISFLSRPKA) the chain is on the periplasmic side. A helical transmembrane segment spans residues 215–235 (LPWLFVVLLYMMGDSVTSLMI). Topologically, residues 236–251 (RPLLVDRGLSLPDIGW) are cytoplasmic. Residues 252–272 (ILGIVSYSARIVSALIAGLVI) traverse the membrane as a helical segment. Residues 273–281 (VKLGRIKSL) lie on the Periplasmic side of the membrane. A helical transmembrane segment spans residues 282 to 302 (IIFGFIADLTTLLYIIPAIGV). The Cytoplasmic segment spans residues 303 to 304 (SS). The helical transmembrane segment at 305-325 (LLVLYTVCIIVNATQSMAYTA) threads the bilayer. Over 326 to 346 (LLSAMMDKCEKNTAATDYTMQ) the chain is Periplasmic. 2 consecutive transmembrane segments (helical) span residues 347-367 (VSVM…LATT) and 368-388 (MGYS…VFLI). Residues 389 to 396 (TQEYGVSS) are Periplasmic-facing.

This sequence belongs to the major facilitator superfamily.

Its subcellular location is the cell inner membrane. Its function is as follows. Involved in the TolC-like protein HgdD-dependent secretion of schizokinen, a dihydroxamate-type siderophore. Transports schizokinen from the cytoplasm to the periplasm. This chain is Schizokinen exporter SchE, found in Nostoc sp. (strain PCC 7120 / SAG 25.82 / UTEX 2576).